The primary structure comprises 159 residues: MNIRRKNRLWIACAVLAGLALTIGLVLYALRSNIDLFYTPGEILYGKRETQQMPEVGQRLRVGGMVMPGSVQRDPNSLKVTFTIYDAEGSVDVSYEGILPDLFREGQGVVVQGELEEGNHILAKEVLAKHDENYTPPEVEKAMEANHRRPASVYKDPAS.

Residues 1–8 (MNIRRKNR) are Cytoplasmic-facing. Residues 9 to 29 (LWIACAVLAGLALTIGLVLYA) form a helical; Signal-anchor for type II membrane protein membrane-spanning segment. At 30–159 (LRSNIDLFYT…PASVYKDPAS (130 aa)) the chain is on the periplasmic side. Residues H130 and Y134 each contribute to the heme site. Positions 134–147 (YTPPEVEKAMEANH) are enriched in basic and acidic residues. The tract at residues 134–159 (YTPPEVEKAMEANHRRPASVYKDPAS) is disordered.

This sequence belongs to the CcmE/CycJ family.

It is found in the cell inner membrane. In terms of biological role, heme chaperone required for the biogenesis of c-type cytochromes. Transiently binds heme delivered by CcmC and transfers the heme to apo-cytochromes in a process facilitated by CcmF and CcmH. In Escherichia coli (strain SMS-3-5 / SECEC), this protein is Cytochrome c-type biogenesis protein CcmE.